A 103-amino-acid chain; its full sequence is Large ribosomal subunit protein uL24 (103 aa).

The protein belongs to the universal ribosomal protein uL24 family. As to quaternary structure, part of the 50S ribosomal subunit.

Its function is as follows. One of two assembly initiator proteins, it binds directly to the 5'-end of the 23S rRNA, where it nucleates assembly of the 50S subunit. Functionally, one of the proteins that surrounds the polypeptide exit tunnel on the outside of the subunit. This is Large ribosomal subunit protein uL24 from Christiangramia forsetii (strain DSM 17595 / CGMCC 1.15422 / KT0803) (Gramella forsetii).